The following is a 77-amino-acid chain: UPF0346 protein lin1971 (77 aa).

Belongs to the UPF0346 family.

In Listeria innocua serovar 6a (strain ATCC BAA-680 / CLIP 11262), this protein is UPF0346 protein lin1971.